A 374-amino-acid chain; its full sequence is MRIAVDAMGGDYAPEEIIKGALLAHRQLRVGIALVGRPDSLKPFLPQPLPAGITIVPAEEDVGMAEEPLMVRKKPKASINISMQQVRSNQADAVVAAGNTGAAMAAAYLNLGRLAGIDRPAIGALLPTLKGKPVLLLDVGANVDCRPRFLEQFARMGSLYCQCVLGIEKPRVGLLNIGEEPNKGNDLALATHQRLAQLPGIHFAGNAEGRDVLTGEFDVVVCDGFVGNALLKFAESVGQVITQVLREELPRGWRGKLGCWLLRPNLKQVKRRMDYVEYGGALLLGVNGICVITHGSSKAPMVYHAIRLAKEAAEQKILQRLQAEMVDPREPESNPRRRTRPLQVYSGSGPEVLPLGSLERTSSRCPEPVEDAQP.

Residues alanine 323–proline 374 are disordered. Residues valine 326–proline 335 are compositionally biased toward basic and acidic residues.

The protein belongs to the PlsX family. As to quaternary structure, homodimer. Probably interacts with PlsY.

It localises to the cytoplasm. The enzyme catalyses a fatty acyl-[ACP] + phosphate = an acyl phosphate + holo-[ACP]. Its pathway is lipid metabolism; phospholipid metabolism. Catalyzes the reversible formation of acyl-phosphate (acyl-PO(4)) from acyl-[acyl-carrier-protein] (acyl-ACP). This enzyme utilizes acyl-ACP as fatty acyl donor, but not acyl-CoA. This Synechococcus sp. (strain JA-2-3B'a(2-13)) (Cyanobacteria bacterium Yellowstone B-Prime) protein is Phosphate acyltransferase.